A 121-amino-acid chain; its full sequence is Small ribosomal subunit protein uS13 (121 aa).

The disordered stretch occupies residues 89–121 (MRHRRGLPVRGQNTKNNARTRKGKKVSIAGKKK). The segment covering 106–121 (ARTRKGKKVSIAGKKK) has biased composition (basic residues).

It belongs to the universal ribosomal protein uS13 family. Part of the 30S ribosomal subunit. Forms a loose heterodimer with protein S19. Forms two bridges to the 50S subunit in the 70S ribosome.

Located at the top of the head of the 30S subunit, it contacts several helices of the 16S rRNA. In the 70S ribosome it contacts the 23S rRNA (bridge B1a) and protein L5 of the 50S subunit (bridge B1b), connecting the 2 subunits; these bridges are implicated in subunit movement. Contacts the tRNAs in the A and P-sites. The chain is Small ribosomal subunit protein uS13 from Latilactobacillus sakei subsp. sakei (strain 23K) (Lactobacillus sakei subsp. sakei).